A 687-amino-acid chain; its full sequence is Follicle-stimulating hormone receptor (687 aa).

A signal peptide spans 1-17 (MALLLVSLLAFLSLGSG). Residues 18-46 (CHHQVCHYSNRVFLCQESKVTEIPSDLPR) enclose the LRRNT domain. At 18 to 358 (CHHQVCHYSN…EDIMGYDILR (341 aa)) the chain is on the extracellular side. A disulfide bridge connects residues cysteine 23 and cysteine 32. LRR repeat units follow at residues 49–72 (LELRFVLTKLRVIPKGAFSGFGDL), 73–97 (KKIEISQNDVLEVIEANVFSNLPKL), 98–118 (HEIRIEKANNLLYIDHDAFQN), 119–143 (LPNLQYLLISNTGIKHLPAVHKIQS), 144–169 (LQKVLLDIQDNINIHIVERNSFMGLS), 170–192 (FESMILRLSKNGIQEIHNCAFNG), 193–216 (TQLDELNLSDNNNLEELPNDVFQG), 217–240 (ASGPVILDISGTRIHSLPNYGLEN), and 241–259 (LKKLRARSTYNLKKLPSLE). Asparagine 191 and asparagine 199 each carry an N-linked (GlcNAc...) asparagine glycan. Intrachain disulfides connect cysteine 275–cysteine 338, cysteine 276–cysteine 292, cysteine 276–cysteine 348, and cysteine 292–cysteine 330. Asparagine 293 carries an N-linked (GlcNAc...) asparagine glycan. Position 327 is a sulfotyrosine (tyrosine 327). The chain crosses the membrane as a helical span at residues 359–379 (VLIWFISILAITGNIIVLVIL). Topologically, residues 380-390 (ITSQYKLTVPR) are cytoplasmic. Residues 391 to 413 (FLMCNLAFADLCIGIYLLLIASV) form a helical membrane-spanning segment. Topologically, residues 414–435 (DIHTKSQYHNYAIDWQTGAGCD) are extracellular. Cysteine 434 and cysteine 509 are oxidised to a cystine. The chain crosses the membrane as a helical span at residues 436 to 457 (AAGFFTVFGSELSVYTLTAITL). Residues 458–477 (ERWHTITHAMQLECKVQLRH) lie on the Cytoplasmic side of the membrane. Residues 478–500 (AASVMLVGWIFGFGVGLLPIFGI) form a helical membrane-spanning segment. Over 501-520 (STYMKVSICLPMDIDSPLSQ) the chain is Extracellular. Residues 521 to 542 (LYVMSLLVLNVLAFVVICGCYT) form a helical membrane-spanning segment. At 543 to 565 (HIYLTVRNPNIVSSSSDTKIAKR) the chain is on the cytoplasmic side. The helical transmembrane segment at 566–589 (MGILIFTDFLCMAPISFFGISASL) threads the bilayer. The Extracellular portion of the chain corresponds to 590 to 600 (KVALITVSKSK). The chain crosses the membrane as a helical span at residues 601–622 (ILLVLFYPINSCANPFLYAIFT). Over 623-687 (KNFRRDFFIL…LVPLSHLAQN (65 aa)) the chain is Cytoplasmic.

Belongs to the G-protein coupled receptor 1 family. FSH/LSH/TSH subfamily. Homotrimer. Functions as a homotrimer binding the FSH hormone heterodimer composed of CGA and FSHB. Interacts with ARRB2. Interacts with APPL2; interaction is independent of follicle stimulating hormone stimulation. Post-translationally, N-glycosylated; indirectly required for FSH-binding, possibly via a conformational change that allows high affinity binding of hormone. Sulfated.

The protein localises to the cell membrane. Its function is as follows. G protein-coupled receptor for follitropin, the follicle-stimulating hormone. Through cAMP production activates the downstream PI3K-AKT and ERK1/ERK2 signaling pathways. This is Follicle-stimulating hormone receptor (FSHR) from Equus asinus (Donkey).